The chain runs to 64 residues: Large ribosomal subunit protein bL35 (64 aa).

Basic residues predominate over residues methionine 1–lysine 14. Residues methionine 1–histidine 30 are disordered. Basic and acidic residues predominate over residues leucine 21–histidine 30.

The protein belongs to the bacterial ribosomal protein bL35 family.

In Corynebacterium efficiens (strain DSM 44549 / YS-314 / AJ 12310 / JCM 11189 / NBRC 100395), this protein is Large ribosomal subunit protein bL35.